A 296-amino-acid polypeptide reads, in one-letter code: Small ribosomal subunit biogenesis GTPase RsgA (296 aa).

Residues 63-224 (RNQLVRPPVA…IADTPGFSSY (162 aa)) enclose the CP-type G domain. GTP-binding positions include 112–115 (SKTD) and 167–175 (GQTGAGKST). Residues Cys-248, Cys-253, His-255, and Cys-261 each coordinate Zn(2+).

It belongs to the TRAFAC class YlqF/YawG GTPase family. RsgA subfamily. As to quaternary structure, monomer. Associates with 30S ribosomal subunit, binds 16S rRNA. Requires Zn(2+) as cofactor.

It is found in the cytoplasm. One of several proteins that assist in the late maturation steps of the functional core of the 30S ribosomal subunit. Helps release RbfA from mature subunits. May play a role in the assembly of ribosomal proteins into the subunit. Circularly permuted GTPase that catalyzes slow GTP hydrolysis, GTPase activity is stimulated by the 30S ribosomal subunit. This chain is Small ribosomal subunit biogenesis GTPase RsgA, found in Limosilactobacillus reuteri (strain DSM 20016) (Lactobacillus reuteri).